Here is a 1009-residue protein sequence, read N- to C-terminus: Cilia- and flagella-associated protein 70 (1009 aa).

The span at 410–428 shows a compositional bias: basic and acidic residues; it reads NLKEDKPVKEKDIDGRPRP. The segment at 410–457 is disordered; that stretch reads NLKEDKPVKEKDIDGRPRPGDVQAPSIKSQSSDTPLEGEPPLSHNPEG. TPR repeat units follow at residues 498-531, 635-668, 669-702, 704-736, 888-921, 923-954, and 956-988; these read PPLT…EYYR, SEQL…EPQN, LDHW…NQSH, HSLL…EPTN, HFIF…SPSC, TWLG…NNYN, and EVWA…KLKD.

It belongs to the CFAP70 family.

It is found in the cell projection. It localises to the cilium. The protein localises to the flagellum. The protein resides in the cytoplasm. Its subcellular location is the cytoskeleton. It is found in the flagellum basal body. It localises to the cilium axoneme. Axoneme-binding protein that plays a role in the regulation of ciliary motility and cilium length. This is Cilia- and flagella-associated protein 70 from Macaca fascicularis (Crab-eating macaque).